A 1404-amino-acid polypeptide reads, in one-letter code: DNA (cytosine-5)-methyltransferase 3 (1404 aa).

Over residues 1 to 10 (MKTKAGKQKK) the composition is skewed to basic residues. Residues 1–35 (MKTKAGKQKKRSVDSDDDVSRERRPKRATSGTNFK) are disordered. A compositionally biased stretch (basic and acidic residues) spans 11–22 (RSVDSDDDVSRE). A Glycyl lysine isopeptide (Lys-Gly) (interchain with G-Cter in ubiquitin) cross-link involves residue lysine 486. BAH domains lie at 614-748 (RKMD…FSLP) and 788-929 (IKYS…KKLP). The region spanning 969–1402 (LATLDIFAGC…RKLKEALHLR (434 aa)) is the SAM-dependent MTase C5-type domain. Cysteine 1085 is an active-site residue.

The protein belongs to the class I-like SAM-binding methyltransferase superfamily. C5-methyltransferase family.

It localises to the nucleus. It catalyses the reaction a 2'-deoxycytidine in DNA + S-adenosyl-L-methionine = a 5-methyl-2'-deoxycytidine in DNA + S-adenosyl-L-homocysteine + H(+). In terms of biological role, maintains chromatin CpG methylation that plays a role in genomic imprinting, regulation of embryogenesis and seed viability. Required for proper patterns of CG DNA methylation in dividing cells. Required during the endosperm development in seeds. The chain is DNA (cytosine-5)-methyltransferase 3 (MET3) from Arabidopsis thaliana (Mouse-ear cress).